A 569-amino-acid chain; its full sequence is Matrix metalloproteinase-21 (569 aa).

The N-terminal stretch at 1–24 (MLAASIFRPTLLLCWLAAPWPTQP) is a signal peptide. The propeptide occupies 25-144 (ESLFHSRDRS…GPPPRARSRR (120 aa)). Residues 115–122 (PRCGVPDM) carry the Cysteine switch motif. The interval 115-166 (PRCGVPDMRPPPPSAPPSPPGPPPRARSRRSPRAPLSLSRRGWQPRGYPDGG) is disordered. Cysteine 117 provides a ligand contact to Zn(2+). The span at 122–139 (MRPPPPSAPPSPPGPPPR) shows a compositional bias: pro residues. A compositionally biased stretch (low complexity) spans 147 to 156 (RAPLSLSRRG). Residue histidine 283 participates in Zn(2+) binding. Glutamate 284 is a catalytic residue. Zn(2+) is bound by residues histidine 287 and histidine 293. Cysteine 329 and cysteine 560 are disulfide-bonded. Hemopexin repeat units lie at residues 330–389 (EGSF…WPGI), 391–447 (THNI…FPGI), 448–496 (PSPL…FPAV), and 503–559 (FRNI…WFDV). N-linked (GlcNAc...) asparagine glycosylation is present at asparagine 372.

Belongs to the peptidase M10A family. Requires Zn(2+) as cofactor. The cofactor is Ca(2+). The precursor is cleaved by a furin endopeptidase. As to expression, identified in fetal brain, kidney and liver. In adult tissues found primarily in ovary, kidney, liver, lung, placenta, brain and peripheral blood leukocytes. Expressed as well in various cancer cell lines.

It localises to the secreted. Its function is as follows. Plays a specialized role in the generation of left-right asymmetry during embryogenesis. May act as a negative regulator of the NOTCH-signaling pathway. Cleaves alpha-1-antitrypsin. The polypeptide is Matrix metalloproteinase-21 (MMP21) (Homo sapiens (Human)).